The chain runs to 168 residues: Photosystem I assembly protein Ycf3 (168 aa).

TPR repeat units follow at residues 29-62 (AFSY…EEDP), 66-99 (SYTL…NANL), and 117-150 (AQSL…APDN).

Belongs to the Ycf3 family.

Its subcellular location is the plastid. The protein resides in the chloroplast thylakoid membrane. Its function is as follows. Essential for the assembly of the photosystem I (PSI) complex. May act as a chaperone-like factor to guide the assembly of the PSI subunits. This Phaeodactylum tricornutum (strain CCAP 1055/1) protein is Photosystem I assembly protein Ycf3.